A 3357-amino-acid chain; its full sequence is Versican core protein (3357 aa).

Positions 1 to 23 (MLINMKGILWMCSTLLLTHALHQ) are cleaved as a signal peptide. Residues 24-146 (AKMETSPPVK…EDTQDTMSLA (123 aa)) form the Ig-like V-type domain. Cystine bridges form between cysteine 44–cysteine 130, cysteine 172–cysteine 243, cysteine 196–cysteine 217, cysteine 270–cysteine 333, and cysteine 294–cysteine 315. Asparagine 57 carries an N-linked (GlcNAc...) asparagine glycan. Link domains follow at residues 150 to 245 (VVFH…YCYV) and 251 to 347 (DVFH…YCFK). N-linked (GlcNAc...) asparagine glycosylation is found at asparagine 330, asparagine 351, and asparagine 441. Positions 348–1308 (PKQNISEATT…IIEVRENKTG (961 aa)) are GAG-alpha (glucosaminoglycan attachment domain). Residues 625–634 (EPKTNGKVTE) show a composition bias toward basic and acidic residues. Residues 625 to 646 (EPKTNGKVTEDEFGQSQPTTTF) are disordered. An O-linked (Xyl...) (chondroitin sulfate) serine glycan is attached at serine 660. Disordered stretches follow at residues 801–863 (WPGD…KPLE) and 881–908 (TSTSIGSAEKSASGEPTTGDRFLPTTST). N-linked (GlcNAc...) asparagine glycosylation occurs at asparagine 807. Residues asparagine 914 and asparagine 951 are each glycosylated (N-linked (GlcNAc...) asparagine). Disordered stretches follow at residues 1010–1088 (SPGA…YPPG) and 1252–1288 (DHMTSKPPVTQPTRPSVVERKTTSKTQELSTSTPAAG). Composition is skewed to polar residues over residues 1017 to 1042 (TGVSQGETQEEPQTPGSPFPTFSSTA) and 1275 to 1286 (SKTQELSTSTPA). N-linked (GlcNAc...) asparagine glycosylation is found at asparagine 1305 and asparagine 1371. Residues 1309–3051 (RLSDMIVSGH…VEGTAVYLPG (1743 aa)) form a GAG-beta region. Basic and acidic residues predominate over residues 1396–1406 (DPEAAEARRGQ). 2 disordered regions span residues 1396–1421 (DPEAAEARRGQYESVAPSQNFPDSSA) and 1458–1524 (TYPE…AIEQ). Composition is skewed to polar residues over residues 1411 to 1421 (APSQNFPDSSA) and 1487 to 1498 (WSESITESSPNL). 2 O-linked (Xyl...) (chondroitin sulfate) serine glycosylation sites follow: serine 1517 and serine 1599. Residues 1664–1705 (LPSPDARPTTVWNSNSTSEWVSDKSFEGRKKKENEDEEGAVN) are disordered. Positions 1673–1683 (TVWNSNSTSEW) are enriched in polar residues. The N-linked (GlcNAc...) asparagine glycan is linked to asparagine 1678. Residues 1684–1697 (VSDKSFEGRKKKEN) show a composition bias toward basic and acidic residues. O-linked (Xyl...) (chondroitin sulfate) serine glycosylation is found at serine 1907 and serine 1931. The interval 1926–1965 (VGMGGSDDERVRDTQTSSSIPTTSDNIYPVPDSKGPDSTV) is disordered. The span at 1939-1951 (TQTSSSIPTTSDN) shows a compositional bias: polar residues. N-linked (GlcNAc...) asparagine glycosylation occurs at asparagine 2053. 2 O-linked (Xyl...) (chondroitin sulfate) serine glycosylation sites follow: serine 2219 and serine 2226. The N-linked (GlcNAc...) asparagine glycan is linked to asparagine 2243. The segment covering 2308 to 2322 (TLSHTGTEEPTTSTL) has biased composition (polar residues). Disordered regions lie at residues 2308–2374 (TLSH…ATSP) and 2475–2494 (YPTSTLPSTEPYKSPSEGIE). A glycan (N-linked (GlcNAc...) asparagine) is linked at asparagine 2361. Residues 2475–2486 (YPTSTLPSTEPY) are compositionally biased toward low complexity. Residues serine 2585 and serine 2586 each carry the phosphoserine modification. N-linked (GlcNAc...) asparagine glycosylation occurs at asparagine 2626. Residues serine 2696, serine 2697, and serine 2741 are each glycosylated (O-linked (Xyl...) (chondroitin sulfate) serine). Residues 2853–2908 (LGGNVHRTEPPSMSRDPALDVSEDESKHKLLEELETSPTKPETSQDFPNKAKDHIP) are disordered. The span at 2888-2899 (TSPTKPETSQDF) shows a compositional bias: polar residues. The N-linked (GlcNAc...) asparagine glycan is linked to asparagine 3029. Residues 3051-3087 (GPDLCKTNPCLNGGTCYPTETSYVCTCAPGYSGDQCE) form the EGF-like 1 domain. 11 disulfides stabilise this stretch: cysteine 3055–cysteine 3066, cysteine 3060–cysteine 3075, cysteine 3077–cysteine 3086, cysteine 3093–cysteine 3104, cysteine 3098–cysteine 3113, cysteine 3115–cysteine 3124, cysteine 3131–cysteine 3142, cysteine 3159–cysteine 3251, cysteine 3227–cysteine 3243, cysteine 3258–cysteine 3301, and cysteine 3287–cysteine 3314. One can recognise an EGF-like 2; calcium-binding domain in the interval 3089–3125 (DFDECHSNPCRNGATCVDGFNTFRCLCLPSYVGALCE). The C-type lectin domain maps to 3138–3252 (FQGQCYKYFA…CNYHLTYTCK (115 aa)). One can recognise a Sushi domain in the interval 3256–3316 (VACGQPPVVE…WAMPKITCMN (61 aa)). Asparagine 3331 and asparagine 3341 each carry an N-linked (GlcNAc...) asparagine glycan. The span at 3331 to 3342 (NSSSAKDNSINT) shows a compositional bias: polar residues. Residues 3331 to 3357 (NSSSAKDNSINTSKHEHRWSRRQETRR) are disordered.

This sequence belongs to the aggrecan/versican proteoglycan family. Interacts with FBLN1. Phosphorylated by FAM20C in the extracellular medium. Post-translationally, proteolytically cleaved by ADAMTS5 and ADAMTS15 in the pericellular matrix surrounding myoblasts, facilitating myoblast contact and fusion which is required for skeletal muscle development and regeneration. Expressed in the retina (at protein level). Isoform V2: Only expressed in brain.

The protein resides in the secreted. It is found in the extracellular space. It localises to the extracellular matrix. The protein localises to the cell projection. Its subcellular location is the cilium. The protein resides in the photoreceptor outer segment. It is found in the interphotoreceptor matrix. Its function is as follows. May play a role in intercellular signaling and in connecting cells with the extracellular matrix. May take part in the regulation of cell motility, growth and differentiation. Binds hyaluronic acid. The chain is Versican core protein (Vcan) from Mus musculus (Mouse).